The sequence spans 215 residues: 3-demethoxyubiquinol 3-hydroxylase (215 aa).

The disordered stretch occupies residues 26–47 (PSSAHSQRPSPAVVQPEHKMSE). Fe cation contacts are provided by glutamate 64, glutamate 94, histidine 97, glutamate 146, glutamate 178, and histidine 181.

The protein belongs to the COQ7 family. Fe cation serves as cofactor.

It is found in the cell membrane. The catalysed reaction is a 5-methoxy-2-methyl-3-(all-trans-polyprenyl)benzene-1,4-diol + AH2 + O2 = a 3-demethylubiquinol + A + H2O. It participates in cofactor biosynthesis; ubiquinone biosynthesis. Functionally, catalyzes the hydroxylation of 2-nonaprenyl-3-methyl-6-methoxy-1,4-benzoquinol during ubiquinone biosynthesis. The polypeptide is 3-demethoxyubiquinol 3-hydroxylase (Pseudomonas syringae pv. syringae (strain B728a)).